Here is a 201-residue protein sequence, read N- to C-terminus: Large ribosomal subunit protein uL4 (201 aa).

Positions T43–R69 are disordered.

It belongs to the universal ribosomal protein uL4 family. As to quaternary structure, part of the 50S ribosomal subunit.

Its function is as follows. One of the primary rRNA binding proteins, this protein initially binds near the 5'-end of the 23S rRNA. It is important during the early stages of 50S assembly. It makes multiple contacts with different domains of the 23S rRNA in the assembled 50S subunit and ribosome. In terms of biological role, forms part of the polypeptide exit tunnel. The chain is Large ribosomal subunit protein uL4 from Thioalkalivibrio sulfidiphilus (strain HL-EbGR7).